Consider the following 132-residue polypeptide: Large ribosomal subunit protein bL19 (132 aa).

Belongs to the bacterial ribosomal protein bL19 family.

Its function is as follows. This protein is located at the 30S-50S ribosomal subunit interface and may play a role in the structure and function of the aminoacyl-tRNA binding site. This chain is Large ribosomal subunit protein bL19, found in Rhodospirillum centenum (strain ATCC 51521 / SW).